The sequence spans 196 residues: Superantigen-like protein 11 (196 aa).

The interval leucine 65–tyrosine 167 is sialyl Lewis X-binding.

The protein belongs to the staphylococcal/streptococcal toxin family. Homodimer (via its C-terminal domain). Interacts with host FCAR and SELPLG (via sialyl Lewis X).

Its subcellular location is the secreted. In terms of biological role, secreted protein that plays a role in the inhibition of host immune system. Targets myeloid cells such as monocytes or granulocytes through binding with sialyllactosamine-containing glycoproteins. Prevents initial rolling of neutrophils toward the site of infection by interacting with host SELPLG. Disrupts neutrophil motility by induction of cell adhesion via interacting with glycans but independently of SELPLG. The sequence is that of Superantigen-like protein 11 from Staphylococcus aureus.